The chain runs to 138 residues: Protein NrdI (138 aa).

Belongs to the NrdI family.

Functionally, probably involved in ribonucleotide reductase function. The sequence is that of Protein NrdI from Beutenbergia cavernae (strain ATCC BAA-8 / DSM 12333 / CCUG 43141 / JCM 11478 / NBRC 16432 / NCIMB 13614 / HKI 0122).